Reading from the N-terminus, the 219-residue chain is 7-carboxy-7-deazaguanine synthase (219 aa).

Substrate is bound by residues 12–14 (IQG) and Arg27. The region spanning 18–219 (YTGTPSIFIR…VQIHKYLKIR (202 aa)) is the Radical SAM core domain. [4Fe-4S] cluster is bound by residues Cys31, Cys35, and Cys38. Residue Thr40 coordinates Mg(2+). Thr92 contributes to the substrate binding site. S-adenosyl-L-methionine is bound by residues Gly94 and 136-138 (SPK).

The protein belongs to the radical SAM superfamily. 7-carboxy-7-deazaguanine synthase family. In terms of assembly, homodimer. The cofactor is [4Fe-4S] cluster. Requires S-adenosyl-L-methionine as cofactor. It depends on Mg(2+) as a cofactor.

The catalysed reaction is 6-carboxy-5,6,7,8-tetrahydropterin + H(+) = 7-carboxy-7-deazaguanine + NH4(+). Its pathway is purine metabolism; 7-cyano-7-deazaguanine biosynthesis. Catalyzes the complex heterocyclic radical-mediated conversion of 6-carboxy-5,6,7,8-tetrahydropterin (CPH4) to 7-carboxy-7-deazaguanine (CDG), a step common to the biosynthetic pathways of all 7-deazapurine-containing compounds. This Buchnera aphidicola subsp. Schizaphis graminum (strain Sg) protein is 7-carboxy-7-deazaguanine synthase.